The primary structure comprises 391 residues: UPF0229 protein BCA_0588 (391 aa).

Polar residues predominate over residues M1 to W16. 2 disordered regions span residues M1–E31 and H80–A117. The span at K21 to E31 shows a compositional bias: basic and acidic residues. Positions G98–D115 are enriched in gly residues.

It belongs to the UPF0229 family.

The polypeptide is UPF0229 protein BCA_0588 (Bacillus cereus (strain 03BB102)).